A 417-amino-acid chain; its full sequence is Hyaluronidase-3 (417 aa).

The N-terminal stretch at Met1–Gly20 is a signal peptide. Disulfide bonds link Cys42–Cys331, Cys205–Cys220, Cys356–Cys367, Cys361–Cys395, and Cys397–Cys406. The N-linked (GlcNAc...) asparagine glycan is linked to Asn69. Glu129 serves as the catalytic Proton donor. N-linked (GlcNAc...) asparagine glycosylation is present at Asn215. One can recognise an EGF-like domain in the interval Ala352–Gln407.

It belongs to the glycosyl hydrolase 56 family. In terms of processing, N-glycosylated. As to expression, expressed in sperm. Highly expressed in epidermis of the skin, where it is expressed intracellularily in the deep horny layer (at protein level). Bone marrow, testis and kidney.

The protein localises to the secreted. The protein resides in the cell membrane. It is found in the cytoplasmic vesicle. It localises to the secretory vesicle. Its subcellular location is the acrosome. The protein localises to the endoplasmic reticulum. The protein resides in the early endosome. The catalysed reaction is Random hydrolysis of (1-&gt;4)-linkages between N-acetyl-beta-D-glucosamine and D-glucuronate residues in hyaluronate.. In terms of biological role, facilitates sperm penetration into the layer of cumulus cells surrounding the egg by digesting hyaluronic acid. Involved in induction of the acrosome reaction in the sperm. Involved in follicular atresia, the breakdown of immature ovarian follicles that are not selected to ovulate. Induces ovarian granulosa cell apoptosis, possibly via apoptotic signaling pathway involving CASP8 and CASP3 activation, and poly(ADP-ribose) polymerase (PARP) cleavage. Has no hyaluronidase activity in embryonic fibroblasts in vitro. Has no hyaluronidase activity in granulosa cells in vitro. This chain is Hyaluronidase-3 (HYAL3), found in Homo sapiens (Human).